A 117-amino-acid polypeptide reads, in one-letter code: Large ribosomal subunit protein uL24 (117 aa).

Belongs to the universal ribosomal protein uL24 family. In terms of assembly, part of the 50S ribosomal subunit.

Functionally, one of two assembly initiator proteins, it binds directly to the 5'-end of the 23S rRNA, where it nucleates assembly of the 50S subunit. Its function is as follows. One of the proteins that surrounds the polypeptide exit tunnel on the outside of the subunit. The polypeptide is Large ribosomal subunit protein uL24 (Trichormus variabilis (strain ATCC 29413 / PCC 7937) (Anabaena variabilis)).